Consider the following 100-residue polypeptide: Integration host factor subunit alpha (100 aa).

The disordered stretch occupies residues 53–73 (FDLRDKRQRPGRNPKTGEEIP).

Belongs to the bacterial histone-like protein family. As to quaternary structure, heterodimer of an alpha and a beta chain.

This protein is one of the two subunits of integration host factor, a specific DNA-binding protein that functions in genetic recombination as well as in transcriptional and translational control. The chain is Integration host factor subunit alpha from Pseudomonas aeruginosa (strain LESB58).